The following is a 113-amino-acid chain: MIPGGGQPNMQQLLQQAQKMQQDLANAQEELARTEVEGQAGGGLVKATVTGSGELRALVIDPKAVDPEDTETLADLVVAAVQAANENAQALQQQKLGPLAQGLGGGGIPGLPF.

Belongs to the YbaB/EbfC family. Homodimer.

It is found in the cytoplasm. The protein resides in the nucleoid. Functionally, binds to DNA and alters its conformation. May be involved in regulation of gene expression, nucleoid organization and DNA protection. This Streptomyces avermitilis (strain ATCC 31267 / DSM 46492 / JCM 5070 / NBRC 14893 / NCIMB 12804 / NRRL 8165 / MA-4680) protein is Nucleoid-associated protein SAV_4556.